Consider the following 175-residue polypeptide: MPKEQYMCQLCANHGIFNQPKKGHKQKCPYRTCPCSLCALNTKRRALDQIERQLKHTNEPMTGQTATSMASPTPECPLSPTTPKMTPHTPTSGKDTFRNSISSSNMAFTVQLPATITKKELKLLRRDDTPLQNSLERPFPRSIDEAIETIKKEKMSSIFHSAEMLAVGESATSLI.

Positions 8–56 form a DNA-binding region, DM; sequence CQLCANHGIFNQPKKGHKQKCPYRTCPCSLCALNTKRRALDQIERQLKH. Positions 58–93 are disordered; the sequence is NEPMTGQTATSMASPTPECPLSPTTPKMTPHTPTSG. Residues 59 to 71 show a composition bias toward polar residues; that stretch reads EPMTGQTATSMAS. Low complexity predominate over residues 81–91; it reads TTPKMTPHTPT.

As to expression, expressed in a limited number of non-sex-specific tissues in males, including 6-8 unidentified neurons of the head, ventral body wall muscle, and the PHCL/R neurons.

The protein localises to the nucleus. Probable transcription factor that plays a role in the development of the dopaminergic neurons of the male-specific genital sensilla (simple sense organs) known as rays, by negatively regulating the activity of the transcription factor ast-1. Involved in male mating behavior, probably as a result of a role in the differentiation of male-specific diagonal muscles. Required for development of the male proctodeum. May be dispensable in hermaphrodites. The polypeptide is DM domain-containing protein mab-23 (Caenorhabditis elegans).